An 89-amino-acid chain; its full sequence is Putative membrane protein insertion efficiency factor (89 aa).

The segment at 68–89 (VPPPNSDARNAPHEAEASSHRL) is disordered. The segment covering 77–89 (NAPHEAEASSHRL) has biased composition (basic and acidic residues).

The protein belongs to the UPF0161 family.

The protein resides in the cell inner membrane. Could be involved in insertion of integral membrane proteins into the membrane. This Burkholderia thailandensis (strain ATCC 700388 / DSM 13276 / CCUG 48851 / CIP 106301 / E264) protein is Putative membrane protein insertion efficiency factor.